The following is an 88-amino-acid chain: DNA-directed RNA polymerase subunit omega (88 aa).

It belongs to the RNA polymerase subunit omega family. The RNAP catalytic core consists of 2 alpha, 1 beta, 1 beta' and 1 omega subunit. When a sigma factor is associated with the core the holoenzyme is formed, which can initiate transcription.

The enzyme catalyses RNA(n) + a ribonucleoside 5'-triphosphate = RNA(n+1) + diphosphate. Its function is as follows. Promotes RNA polymerase assembly. Latches the N- and C-terminal regions of the beta' subunit thereby facilitating its interaction with the beta and alpha subunits. The chain is DNA-directed RNA polymerase subunit omega from Anaeromyxobacter dehalogenans (strain 2CP-1 / ATCC BAA-258).